Consider the following 206-residue polypeptide: MKTTVKNLNNETVGEIELADEVFGLPTRQDILTRMVLWQLAKRRQGTHKTKGISEIAGTTKKPWRQKGTGRARQGSTRSPQFRGGARIFGPVVRSHEHDLTKKVRKLALKTALSTKAAEGKLFVLEAAKADTHKTKALAAQLKTLGLTSALIIDGANLDETFVRAARNIPHLDVLPEQGANVYDILRRDVLVLTRNAVEQLEARLK.

The segment at 62 to 85 (KPWRQKGTGRARQGSTRSPQFRGG) is disordered.

The protein belongs to the universal ribosomal protein uL4 family. As to quaternary structure, part of the 50S ribosomal subunit.

One of the primary rRNA binding proteins, this protein initially binds near the 5'-end of the 23S rRNA. It is important during the early stages of 50S assembly. It makes multiple contacts with different domains of the 23S rRNA in the assembled 50S subunit and ribosome. Its function is as follows. Forms part of the polypeptide exit tunnel. In Rhodospirillum centenum (strain ATCC 51521 / SW), this protein is Large ribosomal subunit protein uL4.